The following is a 358-amino-acid chain: Peptide chain release factor 1 (358 aa).

Q233 is subject to N5-methylglutamine.

This sequence belongs to the prokaryotic/mitochondrial release factor family. Methylated by PrmC. Methylation increases the termination efficiency of RF1.

It localises to the cytoplasm. Its function is as follows. Peptide chain release factor 1 directs the termination of translation in response to the peptide chain termination codons UAG and UAA. This Listeria monocytogenes serovar 1/2a (strain ATCC BAA-679 / EGD-e) protein is Peptide chain release factor 1.